The sequence spans 69 residues: U-Asilidin(12)-Dg3a (69 aa).

Residues 1–19 (MRFLNIFLFFAAIIAFATA) form the signal peptide. Residues 20–33 (SQVFEEDEIDMEPR) constitute a propeptide that is removed on maturation. 3 disulfides stabilise this stretch: Cys36/Cys59, Cys45/Cys65, and Cys49/Cys67.

It belongs to the asilidin-12 family. As to expression, expressed by the venom gland.

It is found in the secreted. Functionally, moderately increases Kv11.1/KCNH2/ERG1 currents and shifts the voltage-dependence of the channel activation to hyperpolarised potentials. In vivo, induces neurotoxic effects when injected into insects (tested on L.cuprina and A.domesticus). The sequence is that of U-Asilidin(12)-Dg3a from Dolopus genitalis (Giant Australian assassin fly).